A 1306-amino-acid chain; its full sequence is Putative late blight resistance protein homolog R1A-10 (1306 aa).

2 coiled-coil regions span residues S407–Q428 and P520–S542. An NB-ARC domain is found at R521 to G808. ATP is bound at residue G554 to T561. LRR repeat units lie at residues A858–H881, L921–N935, F936–R961, L979–M1007, L1010–D1035, T1057–F1081, P1082–P1106, Y1110–H1129, L1130–N1153, F1156–N1181, and E1216–L1240. Residues L1240–L1306 form the HMA domain.

It belongs to the disease resistance NB-LRR family.

It is found in the cytoplasm. Its subcellular location is the membrane. Its function is as follows. Confers resistance to late blight (Phytophthora infestans) races carrying the avirulence gene Avr1. Resistance proteins guard the plant against pathogens that contain an appropriate avirulence protein via an indirect interaction with this avirulence protein. That triggers a defense system including the hypersensitive response, which restricts the pathogen growth. The chain is Putative late blight resistance protein homolog R1A-10 (R1A-10) from Solanum demissum (Wild potato).